Reading from the N-terminus, the 283-residue chain is Pantothenate synthetase (283 aa).

30-37 (MGYLHDGH) is a binding site for ATP. Histidine 37 serves as the catalytic Proton donor. Glutamine 61 provides a ligand contact to (R)-pantoate. Glutamine 61 is a binding site for beta-alanine. 148-151 (GQKD) serves as a coordination point for ATP. Glutamine 154 serves as a coordination point for (R)-pantoate. 185–188 (MSSR) is a binding site for ATP.

It belongs to the pantothenate synthetase family. Homodimer.

The protein resides in the cytoplasm. It catalyses the reaction (R)-pantoate + beta-alanine + ATP = (R)-pantothenate + AMP + diphosphate + H(+). Its pathway is cofactor biosynthesis; (R)-pantothenate biosynthesis; (R)-pantothenate from (R)-pantoate and beta-alanine: step 1/1. Catalyzes the condensation of pantoate with beta-alanine in an ATP-dependent reaction via a pantoyl-adenylate intermediate. The sequence is that of Pantothenate synthetase from Carboxydothermus hydrogenoformans (strain ATCC BAA-161 / DSM 6008 / Z-2901).